The following is a 56-amino-acid chain: Prokaryotic ubiquitin-like protein UBact (56 aa).

Residues 1–56 (MPERIVKPMPQDPVTKPGDEGPRTPNVPKPDTERLLERMRRVDPRQAQRYRQRSGE) form a disordered region. The segment covering 30–46 (PDTERLLERMRRVDPRQ) has biased composition (basic and acidic residues). Residue Glu56 forms an Isoglutamyl lysine isopeptide (Glu-Lys) (interchain with K-? in acceptor proteins) linkage.

This sequence belongs to the ubiquitin-like protein UBact family.

Its function is as follows. May function as a protein modifier covalently attached to lysine residues of substrate proteins. This may serve to target the modified proteins for degradation by proteasomes. In Acetithermum autotrophicum, this protein is Prokaryotic ubiquitin-like protein UBact.